We begin with the raw amino-acid sequence, 524 residues long: Peptide chain release factor 3 (524 aa).

The 269-residue stretch at 8–276 folds into the tr-type G domain; sequence NKRRTFAIIS…GFAKYAPAPE (269 aa). Residues 17–24, 85–89, and 139–142 each bind GTP; these read SHPDAGKT, DTPGH, and NKLD.

This sequence belongs to the TRAFAC class translation factor GTPase superfamily. Classic translation factor GTPase family. PrfC subfamily.

Its subcellular location is the cytoplasm. Its function is as follows. Increases the formation of ribosomal termination complexes and stimulates activities of RF-1 and RF-2. It binds guanine nucleotides and has strong preference for UGA stop codons. It may interact directly with the ribosome. The stimulation of RF-1 and RF-2 is significantly reduced by GTP and GDP, but not by GMP. This chain is Peptide chain release factor 3, found in Hydrogenovibrio crunogenus (strain DSM 25203 / XCL-2) (Thiomicrospira crunogena).